The following is a 537-amino-acid chain: P2Y purinoceptor 4 (537 aa).

Over 1–49 the chain is Extracellular; the sequence is MTEDIMATSYPTFLTTPYLPMKLLMNLTNDTEDICVFDEGFKFLLLPVS. 2 N-linked (GlcNAc...) asparagine glycosylation sites follow: asparagine 26 and asparagine 29. A helical transmembrane segment spans residues 50–70; sequence YSAVFMVGLPLNIAAMWIFIA. Residues 71-79 are Cytoplasmic-facing; that stretch reads KMRPWNPTT. Residues 80–100 form a helical membrane-spanning segment; the sequence is VYMFNLALSDTLYVLSLPTLV. At 101–118 the chain is on the extracellular side; the sequence is YYYADKNNWPFGEVLCKL. Cysteine 116 and cysteine 193 are oxidised to a cystine. Residues 119-139 traverse the membrane as a helical segment; sequence VRFLFYANLYSSILFLTCISV. Residues 140–161 lie on the Cytoplasmic side of the membrane; the sequence is HRYRGVCHPITSLRRMNAKHAY. A helical membrane pass occupies residues 162 to 182; it reads VICALVWLSVTLCLVPNLIFV. Over 183-210 the chain is Extracellular; sequence TVSPKVKNTICHDTTRPEDFARYVEYST. The helical transmembrane segment at 211–231 threads the bilayer; that stretch reads AIMCLLFGIPCLIIAGCYGLM. At 232–254 the chain is on the cytoplasmic side; the sequence is TRELMKPIVSGNQQTLPSYKKRS. Residues 255 to 275 form a helical membrane-spanning segment; that stretch reads IKTIIFVMIAFAICFMPFHIT. The Extracellular portion of the chain corresponds to 276–292; that stretch reads RTLYYYARLLGIKCYAL. The chain crosses the membrane as a helical span at residues 293 to 316; that stretch reads NVINVTYKVTRPLASANSCIDPIL. Over 317–537 the chain is Cytoplasmic; it reads YFLANDRYRR…EKELQNFPKA (221 aa). A disordered region spans residues 401-505; that stretch reads NRRSTIKRNS…GEGTSTWNLL (105 aa). 2 stretches are compositionally biased toward basic and acidic residues: residues 409–423 and 431–447; these read NSTDKNDMKENRHGE and VVEKEDYETKRENRKTT. Residues 448 to 465 show a composition bias toward polar residues; sequence EQSSKTNAEQDELQTQID.

The protein belongs to the G-protein coupled receptor 1 family.

It localises to the cell membrane. In terms of biological role, receptor for extracellular ATP, UTP, CTP, GTP and ITP. The activity of this receptor is mediated by G proteins which activate a phosphatidylinositol-calcium second messenger system. May play a key role in the early development of neural tissue. In Xenopus laevis (African clawed frog), this protein is P2Y purinoceptor 4 (p2ry4).